Here is a 327-residue protein sequence, read N- to C-terminus: Phenylalanine--tRNA ligase alpha subunit (327 aa).

E252 is a Mg(2+) binding site.

It belongs to the class-II aminoacyl-tRNA synthetase family. Phe-tRNA synthetase alpha subunit type 1 subfamily. As to quaternary structure, tetramer of two alpha and two beta subunits. It depends on Mg(2+) as a cofactor.

The protein localises to the cytoplasm. The enzyme catalyses tRNA(Phe) + L-phenylalanine + ATP = L-phenylalanyl-tRNA(Phe) + AMP + diphosphate + H(+). This is Phenylalanine--tRNA ligase alpha subunit from Shigella flexneri.